A 156-amino-acid polypeptide reads, in one-letter code: Phytohormone-binding protein (156 aa).

Residues Q22, Q68, and T141 each coordinate gibberellin A3.

It belongs to the BetVI family.

Binds gibberellin A3 (GA3) in vitro. In Medicago truncatula (Barrel medic), this protein is Phytohormone-binding protein.